The sequence spans 528 residues: Gamma-taxilin (528 aa).

The span at 1–10 (MATRVEEAAR) shows a compositional bias: basic and acidic residues. The tract at residues 1–36 (MATRVEEAARGRGGGAEEATEAGRGGRRRSPRQKFE) is disordered. 2 positions are modified to omega-N-methylarginine: Arg-12 and Arg-24. A phosphoserine mark is found at Ser-79, Ser-86, Ser-97, and Ser-105. Residues 102 to 130 (TQESREEIPGGEARTDPPDGQQDSECNRN) are disordered. Basic and acidic residues predominate over residues 104–118 (ESREEIPGGEARTDP). Residues 153–464 (EEKLAALCKK…LKEQVSIKAA (312 aa)) are a coiled coil. Position 283 is a phosphotyrosine (Tyr-283). A disordered region spans residues 486–528 (HKELNTSSKRALGAHLEAEPKSQRSAVQKPPSTGSAPAIESVD). The segment covering 508 to 520 (QRSAVQKPPSTGS) has biased composition (polar residues). Ser-517 carries the post-translational modification Phosphoserine.

The protein belongs to the taxilin family. As to quaternary structure, binds to the C-terminal coiled coil region of syntaxin family members STX1A, STX3A and STX4A. Forms a heterodimer with ATF4 in osteoblasts. In terms of tissue distribution, ubiquitously expressed. Expressed at high level in heart and skeletal muscle. Expressed in brain, placenta, lung, liver, kidney and pancreas.

It localises to the nucleus membrane. The protein localises to the cytoplasm. The protein resides in the cytosol. Its function is as follows. May be involved in intracellular vesicle traffic. Inhibits ATF4-mediated transcription, possibly by dimerizing with ATF4 to form inactive dimers that cannot bind DNA. May be involved in regulating bone mass density through an ATF4-dependent pathway. May be involved in cell cycle progression. The chain is Gamma-taxilin (TXLNG) from Homo sapiens (Human).